A 476-amino-acid polypeptide reads, in one-letter code: Serine protease HTRA1B (476 aa).

A signal peptide spans Met1–Ala19. The IGFBP N-terminal domain maps to Tyr25–Lys109. Cystine bridges form between Cys29-Cys54, Cys33-Cys56, Cys38-Cys57, Cys45-Cys60, Cys68-Cys85, and Cys79-Cys106. A Kazal-like domain is found at Thr94–Lys153. The interval Gly200–Leu360 is serine protease. Residues His216, Asp246, and Ser324 each act as charge relay system in the active site. Residues Ala361 to Glu463 enclose the PDZ domain.

The protein belongs to the peptidase S1C family. Forms homotrimers. In the presence of substrate, may form higher-order multimers in a PDZ-independent manner.

It is found in the secreted. The protein resides in the cytoplasm. Its subcellular location is the cytosol. Its function is as follows. Serine protease with a variety of targets, including extracellular matrix proteins and proteoglycans. Through cleavage of proteoglycans, may release soluble FGF-glycosaminoglycan complexes that promote the range and intensity of FGF signals in the extracellular space. Regulates the availability of insulin-like growth factors (IGFs) by cleaving IGF-binding proteins. Inhibits signaling mediated by TGF-beta family members. Consequently, may regulate many physiological processes. Intracellularly, degrades TSC2, leading to the activation of TSC2 downstream targets. This chain is Serine protease HTRA1B (htra1b), found in Danio rerio (Zebrafish).